The chain runs to 335 residues: Fructose-1,6-bisphosphatase class 1 (335 aa).

4 residues coordinate Mg(2+): Glu90, Asp112, Leu114, and Asp115. Substrate-binding positions include 115-118, Asn210, and Lys276; that span reads DGSS. Glu282 is a Mg(2+) binding site.

Belongs to the FBPase class 1 family. Homotetramer. It depends on Mg(2+) as a cofactor.

The protein localises to the cytoplasm. The enzyme catalyses beta-D-fructose 1,6-bisphosphate + H2O = beta-D-fructose 6-phosphate + phosphate. Its pathway is carbohydrate biosynthesis; gluconeogenesis. The chain is Fructose-1,6-bisphosphatase class 1 from Ectopseudomonas mendocina (strain ymp) (Pseudomonas mendocina).